The sequence spans 461 residues: MANQRKPILPLLLEKKPVELVKPSKHTHCETLSLSTLDNDPFNEVMYATIYVFKANGKNLDDPVSLLRKALSELLVHYYPLSGKLMRSESNGKLQLVYLGEGVPFEVATSTLDLSSLNYIENLDDQVALRLVPEIEIDYESNVCYHPLALQVTKFACGGFTIGTALTHAVCDGYGVAQIIHALTELAAGKTEPSVKSVWQRERLVGKIDNKPGKVPGSHIDGFLATSAYLPTTDVVTETINIRAGDIKRLKDSMMKECEYLKESFTTYEVLSSYIWKLRSRALKLNPDGITVLGVAVGIRHVLDPPLPKGYYGNAYIDVYVELTVRELEESSISNIANRVKKAKKTAYEKGYIEEELKNTERLMRDDSMFEGVSDGLFFLTDWRNIGWFGSMDFGWNEPVNLRPLTQRESTVHVGMILKPSKSDPSMEGGVKVIMKLPRDAMVEFKREMATMKKLYFGDTN.

Catalysis depends on proton acceptor residues His-168 and Asp-393.

The protein belongs to the plant acyltransferase family. As to quaternary structure, monomer. In terms of tissue distribution, mainly expressed in roots at low levels, specifically, in the root tip.

It catalyses the reaction 2 (E)-4-coumaroyl-CoA + spermidine = N(1),N(8)-bis(coumaroyl)-spermidine + 2 CoA + 2 H(+). The protein operates within amine and polyamine metabolism; spermidine metabolism. In terms of biological role, spermidine coumaroyl-CoA acyltransferase that mediates the conversion of spermidine into dicoumaroyl-spermidine. The protein is Spermidine coumaroyl-CoA acyltransferase of Arabidopsis thaliana (Mouse-ear cress).